A 234-amino-acid polypeptide reads, in one-letter code: Peptidyl-prolyl cis-trans isomerase FKBP17-3, chloroplastic (234 aa).

The N-terminal 28 residues, 1–28 (MATLFTATVPSHHRFVSPSQHPKQSLLS), are a transit peptide targeting the chloroplast. The PPIase FKBP-type domain maps to 130 to 228 (GYLVVFDVKG…DYIIEVDTVY (99 aa)).

Belongs to the FKBP-type PPIase family.

Its subcellular location is the plastid. It is found in the chloroplast thylakoid lumen. The enzyme catalyses [protein]-peptidylproline (omega=180) = [protein]-peptidylproline (omega=0). Its function is as follows. PPIases accelerate the folding of proteins. It catalyzes the cis-trans isomerization of proline imidic peptide bonds in oligopeptides. In Arabidopsis thaliana (Mouse-ear cress), this protein is Peptidyl-prolyl cis-trans isomerase FKBP17-3, chloroplastic (FKBP17-3).